The primary structure comprises 427 residues: Septin-8-A (427 aa).

In terms of domain architecture, Septin-type G spans 39–305 (QGFCFNILCV…ELYRRCKLEE (267 aa)). Residues 49 to 56 (GETGIGKS) form a G1 motif region. Residues 49-56 (GETGIGKS), glycine 104, 185-193 (KADTISKSE), glycine 239, and arginine 254 each bind GTP. The tract at residues 101–104 (DTVG) is G3 motif. A G4 motif region spans residues 184–187 (AKAD). The stretch at 320–409 (LQETYEAKRK…KAAMEALQSQ (90 aa)) forms a coiled coil. Over residues 376–389 (QEESKKVEDKRRDL) the composition is skewed to basic and acidic residues. The tract at residues 376–427 (QEESKKVEDKRRDLEEEMNSFNRRKAAMEALQSQSFQATSQQPLKKDKDRKN) is disordered. The span at 406–418 (LQSQSFQATSQQP) shows a compositional bias: polar residues.

It belongs to the TRAFAC class TrmE-Era-EngA-EngB-Septin-like GTPase superfamily. Septin GTPase family.

In Xenopus laevis (African clawed frog), this protein is Septin-8-A (sept8-a).